Here is a 284-residue protein sequence, read N- to C-terminus: RNase adapter protein RapZ (284 aa).

An ATP-binding site is contributed by 8–15 (GRSGSGKS). 56 to 59 (DVRN) contributes to the GTP binding site. Residues 266–284 (RSRGKNVQSRHRTLEKRKS) form an RNA-binding region.

Belongs to the RapZ-like family. RapZ subfamily. As to quaternary structure, homotrimer.

Functionally, modulates the synthesis of GlmS, by affecting the processing and stability of the regulatory small RNA GlmZ. When glucosamine-6-phosphate (GlcN6P) concentrations are high in the cell, RapZ binds GlmZ and targets it to cleavage by RNase E. Consequently, GlmZ is inactivated and unable to activate GlmS synthesis. Under low GlcN6P concentrations, RapZ is sequestered and inactivated by an other regulatory small RNA, GlmY, preventing GlmZ degradation and leading to synthesis of GlmS. The polypeptide is RNase adapter protein RapZ (Klebsiella oxytoca).